The sequence spans 3957 residues: Ankyrin-2 (3957 aa).

A compositionally biased stretch (basic and acidic residues) spans 1-14; sequence MMNEDAAQKSDSGE. The interval 1-34 is disordered; sequence MMNEDAAQKSDSGEKFNGSSQRRKRPKKSDSNAS. 24 ANK repeats span residues 30–62, 63–92, 96–125, 129–158, 162–191, 193–220, 232–261, 265–294, 298–327, 331–360, 364–393, 397–426, 430–459, 463–492, 496–525, 529–558, 562–591, 595–624, 628–657, 661–690, 694–723, 727–756, 760–789, and 793–822; these read DSNA…TCNQ, NGLN…SVDS, KGNT…NINA, NGFT…NQST, DGFT…KGKV, LPAL…NADV, SGFT…AVDF, NGIT…QIDA, DGLT…PLLA, NGLS…PVDD, DYLT…NPNA, NGFT…SIQA, SGLT…SPDV, RGET…LVDA, EEQT…HPDA, NGYT…AHSL, KGFT…AADS, NGLT…SPHA, NGYT…ETNI, QGVT…NIHM, SGLT…DQDA, LGYT…NVNA, NGYT…KPNA, and NGNT…EVTT. Residues S31 and S34 each carry the phosphoserine modification. Y378 carries the phosphotyrosine modification. Position 531 is a phosphotyrosine (Y531). At S846 the chain carries Phosphoserine. T853 is subject to Phosphothreonine. S874 carries the phosphoserine modification. An interaction with SPTBN1 region spans residues 966–1125; sequence SGFLVSFMVD…ELNEILNGMD (160 aa). 2 ZU5 domains span residues 968-1156 and 1158-1304; these read FLVS…VVSR and KQDS…LIDC. Residues 1289 to 1423 are UPA domain; sequence VSFTTNVSAR…FVKVRDTTQE (135 aa). Position 1382 is a phosphotyrosine (Y1382). The region spanning 1450–1535 is the Death 1 domain; that stretch reads ITLPIYTKES…SDKAGSIKVK (86 aa). Positions 1457 to 1486 are disordered; the sequence is KESESDQEQEEEIDMTSEKNDETESTETSV. S1459, S1461, S1473, S1500, and S1596 each carry phosphoserine. The span at 1461–1471 shows a compositional bias: acidic residues; it reads SDQEQEEEIDM. 7 disordered regions span residues 1670 to 2137, 2197 to 2411, 2430 to 2484, 2507 to 2586, 2604 to 2852, 2864 to 2904, and 2923 to 2951; these read AVGR…TDFS, ALDG…GLEL, AVSH…GIFP, SRLL…TPEE, EAKQ…SLPH, DISA…TDRF, and QITS…ANHT. Basic and acidic residues-rich tracts occupy residues 1674-1683 and 1711-1733; these read SSEKEGKDIP and KQKQ…KGSS. A phosphoserine mark is found at S1732, S1733, and S1736. Over residues 1766 to 1783 the composition is skewed to basic and acidic residues; that stretch reads IKDKVKALQKRVEDEQKG. Repeat A repeat units lie at residues 1806–1817, 1818–1829, 1830–1841, 1842–1853, 1854–1865, 1866–1877, and 1878–1889; these read HPAASPSLKSER, HAPGSPSPKTER, HSTLSSSAKTER, HPPVSPSSKTEK, HSPVSPSAKTER, HSPASSSSKTEK, and HSPVSPSTKTER. The repeat-rich region stretch occupies residues 1806 to 1983; that stretch reads HPAASPSLKS…PVSPTSKTER (178 aa). 2 positions are modified to phosphoserine: S1855 and S1858. Basic and acidic residues-rich tracts occupy residues 1886 to 1902 and 1921 to 1937; these read KTER…ERHP and RTEK…EKRL. A Repeat A; approximate repeat occupies 1890–1900; it reads HSPVSSTKTER. Repeat A repeat units lie at residues 1901-1912 and 1913-1924; these read HPPVSPSGKTDK and RPPVSPSGRTEK. One copy of the Repeat A; approximate repeat lies at 1925 to 1935; that stretch reads HPPVSPGRTEK. Position 1929 is a phosphoserine (S1929). Repeat A repeat units lie at residues 1936 to 1947, 1948 to 1959, 1960 to 1971, and 1972 to 1983; these read RLPVSPSGRTDK, HQPVSTAGKTEK, HLPVSPSGKTEK, and QPPVSPTSKTER. Basic and acidic residues-rich tracts occupy residues 1980 to 1994, 2003 to 2034, 2075 to 2093, and 2102 to 2117; these read KTER…RELM, PSKH…KEKG, VKKE…HKIP, and EESH…KMAD. S2127 is modified (phosphoserine). A compositionally biased stretch (basic and acidic residues) spans 2128–2137; it reads PDRKTSTDFS. A Phosphothreonine modification is found at T2239. Polar residues predominate over residues 2240–2251; the sequence is PETSPESLSFSP. A Phosphoserine modification is found at S2243. The span at 2252–2282 shows a compositional bias: basic and acidic residues; sequence KKSEEQTGETKESTKTETTTEIRSEKEHPTT. A Phosphothreonine modification is found at T2269. The residue at position 2275 (S2275) is a Phosphoserine. Polar residues predominate over residues 2355–2376; the sequence is TFGSSAHKTQTDSEVQESTATS. 5 positions are modified to phosphoserine: S2405, S2440, S2454, S2516, and S2521. Positions 2523 to 2545 are enriched in polar residues; that stretch reads EQTSLMESSGKSPLSPDTPSSEE. Composition is skewed to basic and acidic residues over residues 2576–2586 and 2604–2619; these read NGEKKRFTPEE and EAKQ…KQEE. T2583 carries the phosphothreonine modification. Phosphoserine is present on residues S2679 and S2701. Low complexity predominate over residues 2696 to 2705; it reads PSSMDSNSSP. A compositionally biased stretch (basic and acidic residues) spans 2729-2776; sequence EPGKSEEEKDSESHLAEDRHAVSTEAEDRSYDKLNRDTDQPKICDGHG. A phosphoserine mark is found at S2781 and S2795. Residues 2781–2791 are compositionally biased toward low complexity; sequence SPSSSAAPVSS. Polar residues predominate over residues 2892–2903; the sequence is SQDSSITTQTDR. S2956 bears the Phosphoserine mark. 3 disordered regions span residues 2987 to 3016, 3069 to 3099, and 3136 to 3462; these read NFEG…SSFE, LMVD…SEQN, and QESR…PTKE. Positions 2998–3016 are enriched in polar residues; sequence QQESTLWEMQSDSVSSSFE. At S3075 the chain carries Phosphoserine. T3078 is subject to Phosphothreonine. Low complexity predominate over residues 3078-3087; the sequence is TTPDTTPART. Over residues 3090–3099 the composition is skewed to polar residues; sequence EEGTPTSEQN. A compositionally biased stretch (basic and acidic residues) spans 3137–3149; sequence ESREETLSEDVKE. A compositionally biased stretch (low complexity) spans 3157 to 3169; that stretch reads LPLETSAESLALS. Positions 3175–3194 are enriched in acidic residues; the sequence is VDDEADLLPDDVSEEVEEIP. Polar residues-rich tracts occupy residues 3198–3212 and 3256–3265; these read AQLN…STET and LDFSTLTRSV. Phosphoserine occurs at positions 3273, 3276, and 3277. Basic and acidic residues predominate over residues 3335–3344; sequence EENKADEAKP. Residues 3357-3374 show a composition bias toward polar residues; the sequence is VEQQLSDLDTSVQKTVAP. Phosphoserine occurs at positions 3390 and 3409. Residues 3409-3423 show a composition bias toward basic and acidic residues; that stretch reads SYTETETESRERAEE. Residues 3446–3460 are compositionally biased toward low complexity; sequence SRSTTSSCRGGTSPT. A Phosphoserine modification is found at S3474. One can recognise a Death 2 domain in the interval 3569–3653; it reads IEERLAYIAD…DIVHLMETNT (85 aa). S3735 carries the post-translational modification Phosphoserine. A phosphothreonine mark is found at T3776, T3797, T3803, and T3814. Residues 3777-3858 are disordered; that stretch reads PGTETSETQK…VESADNQPET (82 aa). Residue S3823 is modified to Phosphoserine. The span at 3832-3841 shows a compositional bias: basic and acidic residues; it reads PSEHREESSP. At S3909 the chain carries Phosphoserine.

As to quaternary structure, interacts with RHBG and SPTBN1. Colocalizes with Na/K ATPase, Na/Ca exchanger and SPTBN1. Directly interacts with DMD; this interaction is necessary for DMD localization at the sarcolemma. Interacts with DCTN4; this interaction is required for DCTN4 retention at costameres. Identified in complexes that contain VIM, EZR, AHNAK, BFSP1, BFSP2, ANK2, PLEC, PRX and spectrin. Interacts (via death domain) with RABGAP1L (via Rab-GAP TBC domain). Phosphorylated at multiple sites by different protein kinases and each phosphorylation event regulates the protein's structure and function. In terms of tissue distribution, present in plasma membrane of neurons as well as glial cells throughout the brain. Expressed in fetal brain and in temporal cortex of adult brain. Also expressed in the inner segments of rod photoreceptors in retina.

It localises to the cytoplasm. Its subcellular location is the cytoskeleton. The protein localises to the membrane. It is found in the myofibril. The protein resides in the sarcomere. It localises to the m line. Its subcellular location is the apical cell membrane. The protein localises to the cell membrane. It is found in the postsynaptic cell membrane. The protein resides in the early endosome. It localises to the recycling endosome. Its subcellular location is the lysosome. The protein localises to the mitochondrion. It is found in the z line. The protein resides in the sarcolemma. It localises to the T-tubule. Its function is as follows. Plays an essential role in the localization and membrane stabilization of ion transporters and ion channels in several cell types, including cardiomyocytes, as well as in striated muscle cells. In skeletal muscle, required for proper localization of DMD and DCTN4 and for the formation and/or stability of a special subset of microtubules associated with costameres and neuromuscular junctions. In cardiomyocytes, required for coordinate assembly of Na/Ca exchanger, SLC8A1/NCX1, Na/K ATPases ATP1A1 and ATP1A2 and inositol 1,4,5-trisphosphate (InsP3) receptors at sarcoplasmic reticulum/sarcolemma sites. Required for expression and targeting of SPTBN1 in neonatal cardiomyocytes and for the regulation of neonatal cardiomyocyte contraction rate. In the inner segment of rod photoreceptors, required for the coordinated expression of the Na/K ATPase, Na/Ca exchanger and beta-2-spectrin (SPTBN1). Plays a role in endocytosis and intracellular protein transport. Associates with phosphatidylinositol 3-phosphate (PI3P)-positive organelles and binds dynactin to promote long-range motility of cells. Recruits RABGAP1L to (PI3P)-positive early endosomes, where RABGAP1L inactivates RAB22A, and promotes polarized trafficking to the leading edge of the migrating cells. Part of the ANK2/RABGAP1L complex which is required for the polarized recycling of fibronectin receptor ITGA5 ITGB1 to the plasma membrane that enables continuous directional cell migration. This chain is Ankyrin-2 (ANK2), found in Homo sapiens (Human).